Consider the following 283-residue polypeptide: MENLESPNYEPALVYEWIIQLVSGTSREQALVELSRKREQYEDLALILWHSYGVMTALLQEIISVYPLLNPPTLTGPTSNRVCNALALLQCIASHPETRIHFLNAHITLFLYPFLNTLSKSKPFEYLRLTSLGVIGALVKNDSPEVINFLLSTEIIPLCLRIMENGSELSKTVAIFIVQKFLCDDVGLQYICQTYERFYAVASVLNNMVMQLVDSFAFRLLKHVIRCYLRLSDNPRAREALRHCLPEPLRDATFAQVLKDDHNTKKCLAQLLINLSDVAVVNQ.

The protein belongs to the CNOT9 family.

Functionally, a differentiation-controlling factor that is essential for the onset of sexual development. Induces ste11 when sexual development is invoked through nitrogen starvation. The polypeptide is Cell differentiation protein rcd1 (rcd1) (Schizosaccharomyces pombe (strain 972 / ATCC 24843) (Fission yeast)).